The chain runs to 448 residues: Tubulin beta-1 chain (448 aa).

GTP-binding residues include Gln11, Glu72, Ser141, Gly145, Thr146, Gly147, Asn207, and Asn229. Residue Glu72 participates in Mg(2+) binding. The interval 424–448 (QQYQDAGMDDDEAEEAYEEEEPVEE) is disordered. The segment covering 430–448 (GMDDDEAEEAYEEEEPVEE) has biased composition (acidic residues).

It belongs to the tubulin family. As to quaternary structure, dimer of alpha and beta chains. A typical microtubule is a hollow water-filled tube with an outer diameter of 25 nm and an inner diameter of 15 nM. Alpha-beta heterodimers associate head-to-tail to form protofilaments running lengthwise along the microtubule wall with the beta-tubulin subunit facing the microtubule plus end conferring a structural polarity. Microtubules usually have 13 protofilaments but different protofilament numbers can be found in some organisms and specialized cells. It depends on Mg(2+) as a cofactor.

Its subcellular location is the cytoplasm. It localises to the cytoskeleton. Functionally, tubulin is the major constituent of microtubules, a cylinder consisting of laterally associated linear protofilaments composed of alpha- and beta-tubulin heterodimers. Microtubules grow by the addition of GTP-tubulin dimers to the microtubule end, where a stabilizing cap forms. Below the cap, tubulin dimers are in GDP-bound state, owing to GTPase activity of alpha-tubulin. The sequence is that of Tubulin beta-1 chain (TUB1) from Colletotrichum gloeosporioides (Anthracnose fungus).